The following is a 271-amino-acid chain: Small ribosomal subunit protein uS9m (271 aa).

The transit peptide at 1–11 directs the protein to the mitochondrion; that stretch reads MFRSLAKLRCF. The interval 251–271 is disordered; the sequence is KVERKKTGQPKARKKYTWVKR. Positions 252 to 271 are enriched in basic residues; it reads VERKKTGQPKARKKYTWVKR.

It belongs to the universal ribosomal protein uS9 family. As to quaternary structure, component of the mitochondrial small ribosomal subunit (mt-SSU). Mature yeast 74S mitochondrial ribosomes consist of a small (37S) and a large (54S) subunit. The 37S small subunit contains a 15S ribosomal RNA (15S mt-rRNA) and at least 32 different proteins. The 54S large subunit contains a 21S rRNA (21S mt-rRNA) and at least 45 different proteins.

It localises to the mitochondrion. Component of the mitochondrial ribosome (mitoribosome), a dedicated translation machinery responsible for the synthesis of mitochondrial genome-encoded proteins, including at least some of the essential transmembrane subunits of the mitochondrial respiratory chain. The mitoribosomes are attached to the mitochondrial inner membrane and translation products are cotranslationally integrated into the membrane. This chain is Small ribosomal subunit protein uS9m (mrps9), found in Schizosaccharomyces pombe (strain 972 / ATCC 24843) (Fission yeast).